The following is a 4239-amino-acid chain: Tenellin synthetase (4239 aa).

In terms of domain architecture, Ketosynthase family 3 (KS3) spans 15-454 (SEPIAIIGSA…GTNAHAIIER (440 aa)). Residues C189, H326, and H374 each act as for beta-ketoacyl synthase activity in the active site. Positions 589–923 (VFTGQGAQWP…ANDAVAFSTA (335 aa)) are malonyl-CoA:ACP transacylase (MAT) domain. The N-terminal hotdog fold stretch occupies residues 993 to 1135 (HELLGRRTPD…GRIAVQLGAK (143 aa)). The interval 993–1310 (HELLGRRTPD…GFEVRAVGEP (318 aa)) is dehydratase (DH) domain. In terms of domain architecture, PKS/mFAS DH spans 993–1313 (HELLGRRTPD…VRAVGEPDAS (321 aa)). The Proton acceptor; for dehydratase activity role is filled by H1025. The tract at residues 1158-1313 (LQQLDCEKLY…VRAVGEPDAS (156 aa)) is C-terminal hotdog fold. Residue D1217 is the Proton donor; for dehydratase activity of the active site. The tract at residues 1459–1652 (RLYTEDKGMH…FSGVDHIVHD (194 aa)) is methyltransferase (MT) domain. Positions 2209 to 2382 (TYLMVGAAGG…AASIIHVGHV (174 aa)) are ketoreductase (KR) domain. The Carrier 1 domain maps to 2502–2582 (EAAVAALKGF…QLSALAAKLA (81 aa)). S2542 is subject to O-(pantetheine 4'-phosphoryl)serine. Disordered stretches follow at residues 2587–2629 (KKRA…EIAQ) and 2642–2712 (LEAS…FFTQ). 2 stretches are compositionally biased toward polar residues: residues 2648–2662 (GGSS…SSVS) and 2670–2681 (ESTLQSSDNNGE). Low complexity predominate over residues 2682 to 2698 (STPSKSSNCNSDSGSDN). The interval 2723–3169 (REAPMSPAQS…SAQSVGDCVV (447 aa)) is condensation (C) domain. The adenylation (A) (KR) domain stretch occupies residues 3203–3614 (CQQHSTKSAI…DGTLLCFGRI (412 aa)). The disordered stretch occupies residues 3728 to 3752 (EAAAATSPSNNNINNNTPSGGGGEK). Low complexity predominate over residues 3729 to 3745 (AAAATSPSNNNINNNTP). The Carrier 2 domain occupies 3751–3835 (EKMTVRQGEL…GMARCVAEQR (85 aa)). The residue at position 3795 (S3795) is an O-(pantetheine 4'-phosphoryl)serine. The segment at 3862–3892 (EKLQHSSASSSSSSSSSSSAGSSSTQRPRKT) is disordered. Over residues 3867–3885 (SSASSSSSSSSSSSAGSSS) the composition is skewed to low complexity. The segment at 3899-4145 (LTGATGFLGG…LDFGQVDKVV (247 aa)) is reductase (RED) domain.

In the C-terminal section; belongs to the NRP synthetase family.

Its pathway is secondary metabolite biosynthesis. Its function is as follows. Hybrid PKS-NRPS synthetase; part of the gene cluster that mediates the biosynthesis of tenellin-type 2-pyridones, iron-chelating compounds involved in iron stress tolerance, competition with the natural competitor fungus Metarhizium robertsii and insect hosts infection. TenS catalyzes the assembly of the polyketide-amino acid backbone. Because tenS lacks a designated enoylreductase (ER) domain, the required activity is provided the enoyl reductase tenC. Upon formation of the polyketide backbone on the thiotemplate, the triketide is transferred to the NRPS module and linked to tyrosine to produce the pyrrolidine-2-dione intermediates, including pretellinin A, 11-hydropretellenin A, 12-hydropretellenin A, 13-hydropretellenin A, 14-hydropretellenin A, 12-oxopretellenin A and prototellinin D. The pathway begins with the assembly of the polyketide-amino acid backbone by the hybrid PKS-NRPS tenS with the help of the enoyl reductase tenC. These enzymes catalyze the synthesis of the pyrrolidine-2-dione intermediates pretellinin A, 11-hydropretellenin A, 12-hydropretellenin A, 13-hydropretellenin A, 14-hydropretellenin A, 12-oxopretellenin A and prototellinin D. The cytochrome P450 monooxygenase tenA then catalyzes an oxidative ring expansion of pretenellin A and 14-hydropretellenin A to form the 2-pyridone core, leading to pretenellin B and pyridovericin, respectively. The cytochrome P450 monooxygenase tenB is then required for the selective N-hydroxylation of the 2-pyridone nitrogen of yield tellinin and 15-hydroxytellenin (15-HT), respectively. The UDP-glucosyltransferase GT1 and the methyltransferase MT1, located outside the tenS gene cluster, contribute to the stepwise glycosylation and methylation of 15-HT to obtain the glycoside pyridovericin-N-O-(4-O-methyl-beta-D-glucopyranoside) (PMGP). Additional related compounds such as 1-O-methyl-15-HT, (8Z)-1-O-methyl-15-HT, and O-methyltenellin A are also produced but the enzymes involved in their biosynthesis have still to be determined. The protein is Tenellin synthetase of Beauveria bassiana (White muscardine disease fungus).